The chain runs to 188 residues: Elongation factor P (188 aa).

The protein belongs to the elongation factor P family.

The protein resides in the cytoplasm. It participates in protein biosynthesis; polypeptide chain elongation. In terms of biological role, involved in peptide bond synthesis. Stimulates efficient translation and peptide-bond synthesis on native or reconstituted 70S ribosomes in vitro. Probably functions indirectly by altering the affinity of the ribosome for aminoacyl-tRNA, thus increasing their reactivity as acceptors for peptidyl transferase. This Rickettsia bellii (strain OSU 85-389) protein is Elongation factor P.